Reading from the N-terminus, the 190-residue chain is Crossover junction endodeoxyribonuclease RuvC (190 aa).

Catalysis depends on residues Asp7, Glu67, and Asp140. Positions 7, 67, and 140 each coordinate Mg(2+).

The protein belongs to the RuvC family. In terms of assembly, homodimer which binds Holliday junction (HJ) DNA. The HJ becomes 2-fold symmetrical on binding to RuvC with unstacked arms; it has a different conformation from HJ DNA in complex with RuvA. In the full resolvosome a probable DNA-RuvA(4)-RuvB(12)-RuvC(2) complex forms which resolves the HJ. It depends on Mg(2+) as a cofactor.

Its subcellular location is the cytoplasm. It carries out the reaction Endonucleolytic cleavage at a junction such as a reciprocal single-stranded crossover between two homologous DNA duplexes (Holliday junction).. In terms of biological role, the RuvA-RuvB-RuvC complex processes Holliday junction (HJ) DNA during genetic recombination and DNA repair. Endonuclease that resolves HJ intermediates. Cleaves cruciform DNA by making single-stranded nicks across the HJ at symmetrical positions within the homologous arms, yielding a 5'-phosphate and a 3'-hydroxyl group; requires a central core of homology in the junction. The consensus cleavage sequence is 5'-(A/T)TT(C/G)-3'. Cleavage occurs on the 3'-side of the TT dinucleotide at the point of strand exchange. HJ branch migration catalyzed by RuvA-RuvB allows RuvC to scan DNA until it finds its consensus sequence, where it cleaves and resolves the cruciform DNA. The sequence is that of Crossover junction endodeoxyribonuclease RuvC from Fusobacterium nucleatum subsp. nucleatum (strain ATCC 25586 / DSM 15643 / BCRC 10681 / CIP 101130 / JCM 8532 / KCTC 2640 / LMG 13131 / VPI 4355).